A 78-amino-acid chain; its full sequence is Exodeoxyribonuclease 7 small subunit (78 aa).

Belongs to the XseB family. As to quaternary structure, heterooligomer composed of large and small subunits.

It localises to the cytoplasm. It catalyses the reaction Exonucleolytic cleavage in either 5'- to 3'- or 3'- to 5'-direction to yield nucleoside 5'-phosphates.. Its function is as follows. Bidirectionally degrades single-stranded DNA into large acid-insoluble oligonucleotides, which are then degraded further into small acid-soluble oligonucleotides. The polypeptide is Exodeoxyribonuclease 7 small subunit (Pediococcus pentosaceus (strain ATCC 25745 / CCUG 21536 / LMG 10740 / 183-1w)).